Here is a 357-residue protein sequence, read N- to C-terminus: MSGPSSWRRAATVMLAAGWSHASPAGFRLLLLQRAQNQRFMPGAHVFPGGVLDAADSSPDWVSLFAPRHTPPRFGLGPEPPRQPSFPGLFHGDADGAALPDDVALRICAIRETFEEAGVLLLRPRDSARASQEPSIALSPPAGLADWRSRVRSDPRCFLQLCAHLDCTPDIWALHDWGGWLTPYGRSSRRFDTTFLLCCLRETPRVEPDLAEVVGYKWLSPSEATECFLSKEIWLAPPQFYEVRRLENFASLSALYRFCLDHPLEVPEKWLPIVLLTSDGSIHLLPGDELYVKGSDFLEKNMSIDKKTEEIVTEGKVVNRIVIHSPHLYEIYMTLTSKSEHGYPKSYTAKKSCTARL.

One can recognise a Nudix hydrolase domain in the interval Ala-10–Glu-242. Residues Ala-97–Gly-118 carry the Nudix box motif. Residues Glu-112 and Glu-116 each contribute to the Mg(2+) site. Lys-300 bears the N6-succinyllysine mark. Residues Ala-355–Leu-357 carry the Microbody targeting signal motif.

This sequence belongs to the Nudix hydrolase family. Monomer. Mg(2+) serves as cofactor. Requires Mn(2+) as cofactor.

The protein resides in the peroxisome. It carries out the reaction an acyl-CoA + H2O = an acyl-4'-phosphopantetheine + adenosine 3',5'-bisphosphate + 2 H(+). It catalyses the reaction CoA + H2O = (R)-4'-phosphopantetheine + adenosine 3',5'-bisphosphate + 2 H(+). The catalysed reaction is hexanoyl-CoA + H2O = hexanoyl-4'-phosphopantetheine + adenosine 3',5'-bisphosphate + 2 H(+). The enzyme catalyses octanoyl-CoA + H2O = S-octanoyl-4'-phosphopantetheine + adenosine 3',5'-bisphosphate + 2 H(+). It carries out the reaction butanoyl-CoA + H2O = S-butanoyl-4'-phosphopantetheine + adenosine 3',5'-bisphosphate + 2 H(+). It catalyses the reaction propanoyl-CoA + H2O = propanoyl-4'-phosphopantetheine + adenosine 3',5'-bisphosphate + 2 H(+). The catalysed reaction is malonyl-CoA + H2O = malonyl-4'-phosphopantetheine + adenosine 3',5'-bisphosphate + 2 H(+). The enzyme catalyses succinyl-CoA + H2O = succinyl-4'-phosphopantetheine + adenosine 3',5'-bisphosphate + 2 H(+). It carries out the reaction choloyl-CoA + H2O = S-choloyl-4'-phosphopantetheine + adenosine 3',5'-bisphosphate + 2 H(+). It catalyses the reaction 4,8-dimethylnonanoyl-CoA + H2O = S-(4,8-dimethylnonanoyl)-4'-phosphopantetheine + adenosine 3',5'-bisphosphate + 2 H(+). The catalysed reaction is (9Z,12Z,15Z)-octadecatrienoyl-CoA + H2O = S-(9Z,12Z,15Z-octadecatrienoyl)-4'-phosphopantetheine + adenosine 3',5'-bisphosphate + 2 H(+). The enzyme catalyses (9Z,12Z)-octadecadienoyl-CoA + H2O = S-(9Z,12Z-octadecadienoyl)-4'-phosphopantetheine + adenosine 3',5'-bisphosphate + 2 H(+). It carries out the reaction (9Z)-hexadecenoyl-CoA + H2O = S-(9Z-hexadecenoyl)-4'-phosphopantetheine + adenosine 3',5'-bisphosphate + 2 H(+). It catalyses the reaction (9Z)-tetradecenoyl-CoA + H2O = S-(9Z-tetradecenoyl)-4'-phosphopantetheine + adenosine 3',5'-bisphosphate + 2 H(+). The catalysed reaction is (6Z)-octenoyl-CoA + H2O = S-(6Z-octenoyl)-4'-phosphopantetheine + adenosine 3',5'-bisphosphate + 2 H(+). The enzyme catalyses hexadecanoyl-CoA + H2O = S-hexadecanoyl-4'-phosphopantetheine + adenosine 3',5'-bisphosphate + 2 H(+). It carries out the reaction tetradecanoyl-CoA + H2O = tetradecanoyl-4'-phosphopantetheine + adenosine 3',5'-bisphosphate + 2 H(+). It catalyses the reaction dodecanoyl-CoA + H2O = S-dodecanoyl-4'-phosphopantetheine + adenosine 3',5'-bisphosphate + 2 H(+). The catalysed reaction is a 5'-end CoA-ribonucleoside in mRNA + H2O = a 5'-end phospho-adenosine-phospho-ribonucleoside in mRNA + (R)-4'-phosphopantetheine + 2 H(+). In terms of biological role, fatty acyl-coenzyme A (CoA) diphosphatase that hydrolyzes fatty acyl-CoA to yield acyl-4'-phosphopantetheine and adenosine 3',5'-bisphosphate. Mediates the hydrolysis of a wide range of CoA esters, including choloyl-CoA and branched-chain fatty-acyl-CoA esters and at low substrate concentrations medium and long-chain fatty-acyl-CoA esters are the primary substrates. Highest activity seen with medium-chain acyl-CoA esters and higher rates of activity seen with the unsaturated acyl-CoA esters compared with the saturated esters. Exhibits decapping activity towards dpCoA-capped RNAs in vitro. The protein is Acyl-coenzyme A diphosphatase NUDT19 (Nudt19) of Rattus norvegicus (Rat).